Reading from the N-terminus, the 290-residue chain is Ribosome-inactivating protein bryodin I (290 aa).

The signal sequence occupies residues 1 to 23 (MIKLLVLWLLILTIFLKSPTVEG). Residues glutamate 183 and glutamate 212 contribute to the active site. Residues asparagine 214 and asparagine 250 are each glycosylated (N-linked (GlcNAc...) asparagine). Positions 271–290 (AIGEDISMTLIGFEHGLYGI) are cleaved as a propeptide — removed in mature form.

This sequence belongs to the ribosome-inactivating protein family. Type 1 RIP subfamily. Post-translationally, appears to undergo proteolytic cleavage in the C-terminal to produce a shorter protein.

The enzyme catalyses Endohydrolysis of the N-glycosidic bond at one specific adenosine on the 28S rRNA.. In terms of biological role, ribosome-inactivating protein of type 1, inhibits protein synthesis in animal cells. The polypeptide is Ribosome-inactivating protein bryodin I (Bryonia dioica (Red bryony)).